A 555-amino-acid chain; its full sequence is Synaptotagmin-14 (555 aa).

At 1–24 (MAIEGGERTCGVHELICIRKVSPE) the chain is on the extracellular side. A helical; Signal-anchor for type III membrane protein membrane pass occupies residues 25-47 (AVGFLSAVGVFIILMLLLFLYIN). Topologically, residues 48–555 (KKFCFENVGG…VCRWHALLES (508 aa)) are cytoplasmic. Disordered stretches follow at residues 157-179 (TPPLDELQPPPYQDDSGSPHLSC) and 222-257 (GYEEDVPSDSTAVLSPEDMSAQGSSSQLPKPFDPEP). 2 consecutive C2 domains span residues 260 to 379 (KYGT…SLPV) and 415 to 550 (SVPE…CRWH).

The protein belongs to the synaptotagmin family. As to quaternary structure, homodimer. Can also form heterodimers. As to expression, highly expressed in fetal and adult brain tissue.

The protein localises to the membrane. May be involved in the trafficking and exocytosis of secretory vesicles in non-neuronal tissues. Is Ca(2+)-independent. The protein is Synaptotagmin-14 (SYT14) of Homo sapiens (Human).